A 467-amino-acid polypeptide reads, in one-letter code: Stromal membrane-associated protein 1 (467 aa).

Positions 18-136 (QLILSKLLRE…KYYDKNAIAI (119 aa)) constitute an Arf-GAP domain. The C4-type zinc finger occupies 33 to 56 (CADCEAKGPRWASWNIGVFICIRC). The span at 145–155 (PLQPLVSSPSL) shows a compositional bias: polar residues. Disordered regions lie at residues 145 to 224 (PLQP…LDGP) and 408 to 467 (KFGL…QLWK). Basic and acidic residues-rich tracts occupy residues 160–185 (DKNK…EKPA) and 192–204 (KLQK…EPKK). The Interaction with clathrin heavy chains motif lies at 218–222 (LLGLD). Over residues 413–438 (QAQQPQWSLSQMNQQMAGMSISSATP) the composition is skewed to polar residues. Over residues 446-467 (SSTTAGWSGSSSGQTLSTQLWK) the composition is skewed to low complexity.

Interacts with ARF6. Interacts with clathrin heavy chains via the clathrin box-like motif. Detected in bone marrow, adrenal gland, trachea, lymph node, spinal cord, peripheral blood leukocytes, thyroid and stomach.

Its subcellular location is the cell membrane. Its function is as follows. GTPase activating protein that acts on ARF6. Plays a role in clathrin-dependent endocytosis. May play a role in erythropoiesis. This Homo sapiens (Human) protein is Stromal membrane-associated protein 1 (SMAP1).